The chain runs to 605 residues: uncharacterized protein (605 aa).

Disordered stretches follow at residues 10-78 (RRGG…FPPA) and 216-248 (RAPD…VRNP). Over residues 20–48 (AGGRPAAGGRPAAGGRPAAGSRAAAGAAG) the composition is skewed to low complexity. Residues 220-233 (CPSPRTPMVKPPFR) are compositionally biased toward pro residues.

This is an uncharacterized protein from Dryophytes versicolor (chameleon treefrog).